The primary structure comprises 313 residues: Ubiquitin-conjugating enzyme E2 Z (313 aa).

A UBC core domain is found at 58–212; the sequence is QCVLRIKRDI…IRHETIRVAV (155 aa). Residue Cys-147 is the Glycyl thioester intermediate of the active site. The segment at 283–313 is disordered; that stretch reads VREKHRKETVDIDSDSSSSETETDTQGSSNP. Positions 297–313 are enriched in low complexity; the sequence is DSSSSETETDTQGSSNP.

This sequence belongs to the ubiquitin-conjugating enzyme family.

It localises to the cytoplasm. It is found in the nucleus. It catalyses the reaction S-ubiquitinyl-[E1 ubiquitin-activating enzyme]-L-cysteine + [E2 ubiquitin-conjugating enzyme]-L-cysteine = [E1 ubiquitin-activating enzyme]-L-cysteine + S-ubiquitinyl-[E2 ubiquitin-conjugating enzyme]-L-cysteine.. The protein operates within protein modification; protein ubiquitination. In terms of biological role, catalyzes the covalent attachment of ubiquitin to other proteins. May be involved in apoptosis regulation. The protein is Ubiquitin-conjugating enzyme E2 Z (ube2z) of Xenopus tropicalis (Western clawed frog).